Here is a 260-residue protein sequence, read N- to C-terminus: Thymidylate synthase (260 aa).

It functions in the pathway pyrimidine metabolism; dTTP biosynthesis. Functionally, is able to catalyze the biosynthesis of dTMP using dUMP, tetrahydrofolate and formaldehyde in vitro, i.e. a reaction equivalent to that catalyzed by bacterial thymidylate synthases (EC 2.1.1.45). However, M.jannaschii like most methanogenic Archaea lacks folates, thus the physiological cosubstrate is unknown but is likely one of the non-methylated methanopterin biosynthetic intermediates. This chain is Thymidylate synthase, found in Methanocaldococcus jannaschii (strain ATCC 43067 / DSM 2661 / JAL-1 / JCM 10045 / NBRC 100440) (Methanococcus jannaschii).